We begin with the raw amino-acid sequence, 147 residues long: D-aminoacyl-tRNA deacylase (147 aa).

The Gly-cisPro motif, important for rejection of L-amino acids motif lies at 136-137 (GP).

This sequence belongs to the DTD family. Homodimer.

It localises to the cytoplasm. The catalysed reaction is glycyl-tRNA(Ala) + H2O = tRNA(Ala) + glycine + H(+). It catalyses the reaction a D-aminoacyl-tRNA + H2O = a tRNA + a D-alpha-amino acid + H(+). In terms of biological role, an aminoacyl-tRNA editing enzyme that deacylates mischarged D-aminoacyl-tRNAs. Also deacylates mischarged glycyl-tRNA(Ala), protecting cells against glycine mischarging by AlaRS. Acts via tRNA-based rather than protein-based catalysis; rejects L-amino acids rather than detecting D-amino acids in the active site. By recycling D-aminoacyl-tRNA to D-amino acids and free tRNA molecules, this enzyme counteracts the toxicity associated with the formation of D-aminoacyl-tRNA entities in vivo and helps enforce protein L-homochirality. This is D-aminoacyl-tRNA deacylase from Persephonella marina (strain DSM 14350 / EX-H1).